Consider the following 411-residue polypeptide: Snake venom metalloproteinase ACLF (411 aa).

An N-terminal signal peptide occupies residues 1–20 (MIQVLLVTLCLAAFPYQGSS). Positions 21-189 (IILESGNVND…KKAFQLNLTP (169 aa)) are excised as a propeptide. A Peptidase M12B domain is found at 197 to 393 (RYVELVIVAD…NNPQCILNKP (197 aa)). Ca(2+) is bound by residues E200 and D284. Disulfide bonds link C308-C388, C348-C372, and C350-C355. H333 lines the Zn(2+) pocket. E334 is an active-site residue. Zn(2+) contacts are provided by H337 and H343. The Ca(2+) site is built by C388, N391, V403, N406, L408, and E410.

The protein belongs to the venom metalloproteinase (M12B) family. P-I subfamily. As to quaternary structure, monomer. It depends on Zn(2+) as a cofactor. In terms of tissue distribution, expressed by the venom gland.

It is found in the secreted. With respect to regulation, inhibited by EDTA and 1,10-phenanthroline, but not by PMSF. Functionally, snake venom zinc metalloprotease that has fibrinolytic activity. The recombinant enzyme cleaves both alpha- and beta-chains of fibrinogen, but not the gamma-chain. The recombinant protein does not produce hemorrhage in mice. Cleaves the peptide substrate Abz-LVEALYQ-EDDnp at the Ala-Leu bond in vitro. The sequence is that of Snake venom metalloproteinase ACLF (ACLPREF) from Agkistrodon contortrix laticinctus (Broad-banded copperhead).